The chain runs to 112 residues: Cytochrome c6 (112 aa).

Residues 1–25 (MKKRFISVCAIAIALLVSLTPAALA) form the signal peptide. The heme c site is built by Cys39, Cys42, His43, and Met83.

It belongs to the cytochrome c family. PetJ subfamily. Monomer. Binds 1 heme c group covalently per subunit.

Its subcellular location is the cellular thylakoid lumen. In terms of biological role, functions as an electron carrier between membrane-bound cytochrome b6-f and photosystem I in oxygenic photosynthesis. This chain is Cytochrome c6 (petJ), found in Thermosynechococcus vestitus (strain NIES-2133 / IAM M-273 / BP-1).